Here is a 736-residue protein sequence, read N- to C-terminus: Oxysterol-binding protein-related protein 9 (736 aa).

Alanine 2 carries the post-translational modification N-acetylalanine. The region spanning 2-99 is the PH domain; that stretch reads ASIVEGPLSK…WIHALEETIL (98 aa). The interval 209-368 is disordered; it reads LEPVISTMPS…RDDDGEAGSV (160 aa). A compositionally biased stretch (low complexity) spans 253–274; sequence TPTPNSTGSGNSPPSSSLTPPS. Phosphoserine is present on residues serine 306, serine 324, serine 325, serine 326, and serine 329. 2 stretches are compositionally biased toward polar residues: residues 314–329 and 336–348; these read SSGSASVLTHSSSGNS and TESLNSSMSNGTS. The residue at position 611 (serine 611) is a Phosphoserine.

It belongs to the OSBP family. Heterodimer with OSBPL11. Interacts with OSBPL10.

The protein localises to the late endosome membrane. It is found in the golgi apparatus. Its subcellular location is the trans-Golgi network membrane. The enzyme catalyses a 1,2-diacyl-sn-glycero-3-phospho-(1D-myo-inositol 4-phosphate)(out) + a 1,2-diacyl-sn-glycero-3-phospho-L-serine(in) = a 1,2-diacyl-sn-glycero-3-phospho-(1D-myo-inositol 4-phosphate)(in) + a 1,2-diacyl-sn-glycero-3-phospho-L-serine(out). Interacts with OSBPL11 to function as lipid transfer proteins. Together they form a heterodimer that localizes at the ER-trans-Golgi membrane contact sites, and exchanges phosphatidylserine (1,2-diacyl-sn-glycero-3-phospho-L-serine, PS) for phosphatidylinositol-4-phosphate (1,2-diacyl-sn-glycero-3-phospho-(1D-myo-inositol 4-phosphate), PI(4)P) between the two organelles, a step that is critical for sphingomyelin synthesis in the Golgi complex. This chain is Oxysterol-binding protein-related protein 9 (Osbpl9), found in Mus musculus (Mouse).